Reading from the N-terminus, the 747-residue chain is Protein neuralized (747 aa).

The NHR 1 domain maps to 97 to 251 (PLQFHTVHGD…NCTGIEFLDA (155 aa)). The segment covering 280-292 (LPQQQQQLPQQQL) has biased composition (low complexity). Positions 280-309 (LPQQQQQLPQQQLTAHHPLQQSRRSLPGGT) are disordered. In terms of domain architecture, NHR 2 spans 359 to 514 (PVPFHITKGR…STQSLRMFRQ (156 aa)). An RING-type zinc finger spans residues 694–735 (CTICYENPIDSVLYMCGHMCMCYDCAIEQWRGVGGGQCPLCR).

The protein localises to the nucleus. Functionally, involved in neurogenesis. Interacts with other neurogenic proteins in the specification of the neuroblast versus epidermoblast cell fate. This Drosophila virilis (Fruit fly) protein is Protein neuralized (neur).